The following is a 66-amino-acid chain: Large ribosomal subunit protein bL35 (66 aa).

The span at 1 to 26 (MPKMKTHRGSAKRFKKTGSGKLKRSH) shows a compositional bias: basic residues. Positions 1-48 (MPKMKTHRGSAKRFKKTGSGKLKRSHAYTSHLFANKSQKQKRKLRKSA) are disordered.

The protein belongs to the bacterial ribosomal protein bL35 family. As to quaternary structure, part of the 50S ribosomal subunit.

The sequence is that of Large ribosomal subunit protein bL35 from Bacillus subtilis (strain 168).